The chain runs to 350 residues: MQVSDFHFELPDELIARYPQPERTASRLLHLNGNSGELHDGQFTDVLDLVQHGDLVVFNNTRVIPARMFGVKASGGKLEVLVERVLDDHSVLAHVRCSKSPKPGNQLWLGENQEYEAEMVARHDTLFEIRFTSEKKVLDILDEIGHMPLPPYIDRPDEDADKERYQTVYNEKPGAVAAPTAGLHFDTDILEKMKAKGVEFAYVTLHVGAGTFQPVRVDNILDHHMHSEYAEVSQEVVDAIKATKARGGRVISVGTTSVRSLESAAQHALKQGTELAPFFDDTEIFIYPGYEFQVVDALVTNFHLPESTLIMLVSAFAGYDNTMKAYDQAVNHQYRFFSYGDAMFITKKTS.

This sequence belongs to the QueA family. Monomer.

The protein localises to the cytoplasm. It catalyses the reaction 7-aminomethyl-7-carbaguanosine(34) in tRNA + S-adenosyl-L-methionine = epoxyqueuosine(34) in tRNA + adenine + L-methionine + 2 H(+). It functions in the pathway tRNA modification; tRNA-queuosine biosynthesis. Transfers and isomerizes the ribose moiety from AdoMet to the 7-aminomethyl group of 7-deazaguanine (preQ1-tRNA) to give epoxyqueuosine (oQ-tRNA). This chain is S-adenosylmethionine:tRNA ribosyltransferase-isomerase, found in Aliivibrio salmonicida (strain LFI1238) (Vibrio salmonicida (strain LFI1238)).